The chain runs to 528 residues: MAAVLNAERLEVSVDGLTLSPDPEERPGAEGAPLLPPPLPPPSPPGSGRGPGASGEQPEPGEAAAGGAAEEARRLEQRWGFGLEELYGLALRFFKEKDGKAFHPTYEEKLKLVALHKQVLMGPYNPDTCPEVGFFDVLGNDRRREWAALGNMSKEDAMVEFVKLLNRCCHLFSTYVASHKIEKEEQEKKRKEEEERRRREEEERERLQKEEEKRRREEEERLRREEEERRRIEEERLRLEQQKQQIMAALNSQTAVQFQQYAAQQYPGNYEQQQILIRQLQEQHYQQYMQQLYQVQLAQQQAALQKQQEVVVAGSSLPTSSKVNATVPSNMMSVNGQAKTHTDSSEKELEPEAAEEALENGPKESLPVIAAPSMWTRPQIKDFKEKIQQDADSVITVGRGEVVTVRVPTHEEGSYLFWEFATDNYDIGFGVYFEWTDSPNTAVSVHVSESSDDDEEEEENIGCEEKAKKNANKPLLDEIVPVYRRDCHEEVYAGSHQYPGRGVYLLKFDNSYSLWRSKSVYYRVYYTR.

A disordered region spans residues 1-71 (MAAVLNAERL…EAAAGGAAEE (71 aa)). N-acetylalanine; in Golgi resident protein GCP60, N-terminally processed is present on alanine 2. Serine 13 bears the Phosphoserine mark. Threonine 18 is modified (phosphothreonine). 3 positions are modified to phosphoserine: serine 20, serine 43, and serine 47. The segment covering 34–45 (LLPPPLPPPSPP) has biased composition (pro residues). Residues 54-69 (SGEQPEPGEAAAGGAA) are compositionally biased toward low complexity. An ACB domain is found at 83-174 (LEELYGLALR…LNRCCHLFST (92 aa)). Residues 174 to 257 (TYVASHKIEK…AALNSQTAVQ (84 aa)) adopt a coiled-coil conformation. Residues 182–230 (EKEEQEKKRKEEEERRRREEEERERLQKEEEKRRREEEERLRREEEERR) form a disordered region. Residues 182-240 (EKEEQEKKRKEEEERRRREEEERERLQKEEEKRRREEEERLRREEEERRRIEEERLRLE) form a charged amino-acid region (CAR) region. Positions 241–308 (QQKQQIMAAL…QQQAALQKQQ (68 aa)) are q domain; Interaction with PI4KB, TBC1D22A and TBC1D22B. Positions 335–362 (NGQAKTHTDSSEKELEPEAAEEALENGP) are disordered. Residues 340-350 (THTDSSEKELE) show a composition bias toward basic and acidic residues. The GOLD domain maps to 384-526 (KEKIQQDADS…SKSVYYRVYY (143 aa)). The segment at 514–516 (LWR) is membrane-binding.

Homodimer. Interacts with the C-terminal cytoplasmic domain of giantin/GOLGB1. Interacts with PBR and PKA regulatory subunit RI-alpha. Does not interact with PKA regulatory subunit RI-beta nor PKA regulatory subunit RII-alpha. Interacts (via Q domain) with PI4KB (via N-terminus). Interacts (via Q domain) with TBC1D22A and TBC1D22B; interactions with PI4KB and with TBC1D22A and TBC1D22B are mutually exclusive. Interacts with C10ORF76 and RAB11B. As to quaternary structure, (Microbial infection) Interacts (via GOLD domain) with 3A proteins from various picornaviruses, including poliovirus, enterovirus A71, enterovirus D68, hepatitis A virus, human parechovirus 1, poliovirus, Human rhinovirus-14 (Hrv-14), coysackievirus B2, coysackievirus B3, coysackievirus B5, Aichi virus and human klassevirus. Interacts (via GOLD domain) with Aichi virus protein 3A; this interaction allows the formation of a 3A/ACBD3/PI4KB complex in order to synthesize PI4P at the viral RNA replication sites. Interacts with Aichi virus protein 2B. Interacts with Aichi virus protein 2C. Ubiquitous, with highest expression in testis and ovary.

It localises to the golgi apparatus membrane. The protein resides in the mitochondrion. Functionally, involved in the maintenance of Golgi structure by interacting with giantin, affecting protein transport between the endoplasmic reticulum and Golgi. Involved in hormone-induced steroid biosynthesis in testicular Leydig cells. Recruits PI4KB to the Golgi apparatus membrane; enhances the enzyme activity of PI4KB activity via its membrane recruitment thereby increasing the local concentration of the substrate in the vicinity of the kinase. In terms of biological role, (Microbial infection) Plays an essential role in Aichi virus RNA replication by recruiting PI4KB at the viral replication sites. The protein is Golgi resident protein GCP60 (ACBD3) of Homo sapiens (Human).